We begin with the raw amino-acid sequence, 525 residues long: Putative ribose/galactose/methyl galactoside import ATP-binding protein (525 aa).

Polar residues predominate over residues 1–15; that stretch reads MFGSATANPPAQRNL. The tract at residues 1–23 is disordered; that stretch reads MFGSATANPPAQRNLPSGDGDGG. 2 consecutive ABC transporter domains span residues 33 to 269 and 279 to 523; these read LEIS…VGRE and KPAG…SGHK. 65–72 contributes to the ATP binding site; the sequence is GENGAGKS.

This sequence belongs to the ABC transporter superfamily. Carbohydrate importer 2 (CUT2) (TC 3.A.1.2) family.

The protein localises to the cell inner membrane. The catalysed reaction is D-ribose(out) + ATP + H2O = D-ribose(in) + ADP + phosphate + H(+). It carries out the reaction D-galactose(out) + ATP + H2O = D-galactose(in) + ADP + phosphate + H(+). Part of an ABC transporter complex involved in carbohydrate import. Could be involved in ribose, galactose and/or methyl galactoside import. Responsible for energy coupling to the transport system. The sequence is that of Putative ribose/galactose/methyl galactoside import ATP-binding protein from Pseudomonas syringae pv. syringae (strain B728a).